A 185-amino-acid chain; its full sequence is MKFIAAVLLVALLCPKDSTSLASRLSGLLGGDGILGGSGLLGGLGKIPLGGRLLGGRPDDVLREDDVLGEVGGRPDDVLGEVGGRPDDVLGEVGGRPDDGLGELGGGPNRLFGGSRLFGGVEKVVAGIPLPNVADVAGGLPVALPVSVRRRRALGVVGGLPVPKLPGVAGGLPVPKLPVPLPVNL.

A signal peptide spans 1–20 (MKFIAAVLLVALLCPKDSTS). A propeptide spanning residues 21–148 (LASRLSGLLG…GLPVALPVSV (128 aa)) is cleaved from the precursor.

As to expression, expressed by the mandibular venom gland.

Its subcellular location is the secreted. In terms of biological role, has a hypotensive activity. This is Celestoxin from Caribicus warreni (Haitian giant galliwasp).